A 315-amino-acid chain; its full sequence is Thymidylate synthase (315 aa).

Residues R29 and 156–157 (RR) contribute to the dUMP site. C176 acts as the Nucleophile in catalysis. Residues 213–216 (RSCD), N224, and 254–256 (HVY) each bind dUMP. D216 is a (6R)-5,10-methylene-5,6,7,8-tetrahydrofolate binding site.

The protein belongs to the thymidylate synthase family. In terms of assembly, homodimer.

The catalysed reaction is dUMP + (6R)-5,10-methylene-5,6,7,8-tetrahydrofolate = 7,8-dihydrofolate + dTMP. It participates in pyrimidine metabolism; dTTP biosynthesis. This is Thymidylate synthase (TMP1) from Candida albicans (strain SC5314 / ATCC MYA-2876) (Yeast).